The sequence spans 462 residues: A-type ATP synthase subunit B (462 aa).

This sequence belongs to the ATPase alpha/beta chains family. In terms of assembly, has multiple subunits with at least A(3), B(3), C, D, E, F, H, I and proteolipid K(x).

Its subcellular location is the cell membrane. Its function is as follows. Component of the A-type ATP synthase that produces ATP from ADP in the presence of a proton gradient across the membrane. The B chain is a regulatory subunit. The polypeptide is A-type ATP synthase subunit B (Cenarchaeum symbiosum (strain A)).